The chain runs to 379 residues: MRLETMKQTPSSPVNIAMQDSFGCAVENRFQQLLDDESDPLDFLYQSAVEVTHRKKKEEGAAKKNANQKSGKKESQKDRKAVVVGGSTDVKVTQQTGQKRAPKNTEKVTQNENVDSQVKVDRTERRTAFREVRPNIMDRSAEYSIEKPMEIMDQDKQMRNYGGRGGMRGRGRGGFPRNTESDNLRGKREFDRHSGSDRARMRPEDKRGGSGPRNWGSIKEAFSEIEAVPVEEQVETTETEATEEHGKVSEETNDDGFSQEMSLDEWKLLQDQNRSKTELNLRKPETSVPSKAVVIHKSKYKNNISENEEESQYCFRKPVNDITAQLDINFGSLARPSRGRGGGGGRGRVRREEAFPHDVINVLADAPNPDDPEDFPALA.

Disordered regions lie at residues 52–260 (THRK…FSQE) and 332–379 (SLAR…PALA). A compositionally biased stretch (basic and acidic residues) spans 71 to 81 (GKKESQKDRKA). Polar residues predominate over residues 107–116 (KVTQNENVDS). Composition is skewed to basic and acidic residues over residues 118–133 (VKVD…REVR) and 139–158 (RSAE…DKQM). A compositionally biased stretch (gly residues) spans 162–174 (GGRGGMRGRGRGG). Residues 179–208 (TESDNLRGKREFDRHSGSDRARMRPEDKRG) are compositionally biased toward basic and acidic residues. Acidic residues-rich tracts occupy residues 232–241 (EQVETTETEA) and 368–379 (NPDDPEDFPALA).

This sequence belongs to the SERBP1-HABP4 family. Associates with ribosomes; promoting ribosome stabilization. Interacts with eef2/eEF2; promoting ribosome stabilization.

It is found in the nucleus. It localises to the cytoplasm. The protein localises to the stress granule. Its subcellular location is the nucleolus. The protein resides in the nucleus speckle. It is found in the cajal body. In terms of biological role, ribosome-binding protein that promotes ribosome hibernation, a process during which ribosomes are stabilized in an inactive state and preserved from proteasomal degradation. Acts via its association with eef2/eEF2 factor at the A-site of the ribosome, promoting ribosome stabilization in an inactive state compatible with storage. Plays a key role in ribosome hibernation in the mature egg by promoting ribosome stabilization. Ribosomes, which are produced in large quantities during oogenesis, are stored and translationally repressed in the egg and early embryo. The protein is Intracellular hyaluronan-binding protein 4.S of Xenopus laevis (African clawed frog).